The following is a 297-amino-acid chain: Glycerol-3-phosphate dehydrogenase [NAD(P)+] (297 aa).

Residues Trp11, Arg30, and Lys79 each coordinate NADPH. Residues Lys79, Gly107, and Ser109 each coordinate sn-glycerol 3-phosphate. Residue Ala111 coordinates NADPH. Lys161, Asp214, Ser224, Arg225, and Asn226 together coordinate sn-glycerol 3-phosphate. Lys161 (proton acceptor) is an active-site residue. Arg225 contacts NADPH. NADPH is bound by residues Val249 and Glu251.

The protein belongs to the NAD-dependent glycerol-3-phosphate dehydrogenase family.

It is found in the cytoplasm. The catalysed reaction is sn-glycerol 3-phosphate + NAD(+) = dihydroxyacetone phosphate + NADH + H(+). It carries out the reaction sn-glycerol 3-phosphate + NADP(+) = dihydroxyacetone phosphate + NADPH + H(+). Its pathway is membrane lipid metabolism; glycerophospholipid metabolism. Its function is as follows. Catalyzes the reduction of the glycolytic intermediate dihydroxyacetone phosphate (DHAP) to sn-glycerol 3-phosphate (G3P), the key precursor for phospholipid synthesis. The chain is Glycerol-3-phosphate dehydrogenase [NAD(P)+] from Wolinella succinogenes (strain ATCC 29543 / DSM 1740 / CCUG 13145 / JCM 31913 / LMG 7466 / NCTC 11488 / FDC 602W) (Vibrio succinogenes).